The primary structure comprises 243 residues: Protein unc-119 homolog B (243 aa).

Residues 1–21 (MNSQSSRNETAATAVNGSDSA) show a composition bias toward polar residues. The interval 1-49 (MNSQSSRNETAATAVNGSDSAAASRDHKSGGGVLKRLKSRRNQVDRRPV) is disordered. Tetradecanoate is bound at residue tyrosine 134.

It belongs to the PDE6D/unc-119 family. As to expression, detected in embryo. Detected in larvae four days after fertilization, in retina and neural tissues (at protein level). Detected in embryos at the sphere stage, during gastrulation, somitogenesis and in swimming larvae, both within and outside of the developing nervous system. Detected in adults.

It localises to the cell projection. It is found in the cilium. In terms of biological role, myristoyl-binding protein that acts as a cargo adapter: specifically binds the myristoyl moiety of a subset of N-terminally myristoylated proteins and is required for their localization. Plays a key role in localization of proteins to the primary cilium membrane. The protein is Protein unc-119 homolog B (unc119b) of Danio rerio (Zebrafish).